The following is a 217-amino-acid chain: ATP-binding protein BexA (217 aa).

An ABC transporter domain is found at 2–217 (IRVNNVCKKY…AYQYYNETQK (216 aa)). Position 38-45 (38-45 (GRNGAGKS)) interacts with ATP.

Belongs to the ABC transporter superfamily.

Its subcellular location is the cell inner membrane. Putative ATP-binding protein, and an energy-coupling component of capsule polysaccharide export apparatus. This is ATP-binding protein BexA (bexA) from Haemophilus influenzae.